The chain runs to 399 residues: Phosphoglycerate kinase (399 aa).

Substrate is bound by residues 22-24 (DFN), arginine 38, 61-64 (HLGR), arginine 119, and arginine 152. ATP contacts are provided by residues lysine 205, glycine 296, glutamate 327, and 353–356 (GGDT).

It belongs to the phosphoglycerate kinase family. As to quaternary structure, monomer.

The protein localises to the cytoplasm. It catalyses the reaction (2R)-3-phosphoglycerate + ATP = (2R)-3-phospho-glyceroyl phosphate + ADP. Its pathway is carbohydrate degradation; glycolysis; pyruvate from D-glyceraldehyde 3-phosphate: step 2/5. This is Phosphoglycerate kinase from Nitratiruptor sp. (strain SB155-2).